A 603-amino-acid polypeptide reads, in one-letter code: UvrABC system protein C (603 aa).

The region spanning 15 to 92 (DQPGCYLMKD…IKKHDPRFNI (78 aa)) is the GIY-YIG domain. The region spanning 197 to 232 (KTVKNDLMKKMQEAAENMEFEKAGEFRDQINAIETT) is the UVR domain.

This sequence belongs to the UvrC family. As to quaternary structure, interacts with UvrB in an incision complex.

The protein localises to the cytoplasm. Its function is as follows. The UvrABC repair system catalyzes the recognition and processing of DNA lesions. UvrC both incises the 5' and 3' sides of the lesion. The N-terminal half is responsible for the 3' incision and the C-terminal half is responsible for the 5' incision. This chain is UvrABC system protein C, found in Listeria monocytogenes serotype 4a (strain HCC23).